Here is a 206-residue protein sequence, read N- to C-terminus: GTP cyclohydrolase 1 (206 aa).

Zn(2+)-binding residues include cysteine 95, histidine 98, and cysteine 166.

The protein belongs to the GTP cyclohydrolase I family. As to quaternary structure, toroid-shaped homodecamer, composed of two pentamers of five dimers.

It catalyses the reaction GTP + H2O = 7,8-dihydroneopterin 3'-triphosphate + formate + H(+). It participates in cofactor biosynthesis; 7,8-dihydroneopterin triphosphate biosynthesis; 7,8-dihydroneopterin triphosphate from GTP: step 1/1. The chain is GTP cyclohydrolase 1 from Bartonella henselae (strain ATCC 49882 / DSM 28221 / CCUG 30454 / Houston 1) (Rochalimaea henselae).